Here is a 61-residue protein sequence, read N- to C-terminus: Small ribosomal subunit protein uS14 (61 aa).

4 residues coordinate Zn(2+): C24, C27, C40, and C43.

The protein belongs to the universal ribosomal protein uS14 family. Zinc-binding uS14 subfamily. Part of the 30S ribosomal subunit. Contacts proteins S3 and S10. It depends on Zn(2+) as a cofactor.

In terms of biological role, binds 16S rRNA, required for the assembly of 30S particles and may also be responsible for determining the conformation of the 16S rRNA at the A site. The chain is Small ribosomal subunit protein uS14 from Thermosipho africanus (strain TCF52B).